A 116-amino-acid chain; its full sequence is Large ribosomal subunit protein P2 (116 aa).

The interval 60–116 (GKLSSMPSGGGVAAAAGGGGAAAGGGGAAPAAEEKKEEKKEESEEESDDDMGFGLFD) is disordered. The segment covering 67–87 (SGGGVAAAAGGGGAAAGGGGA) has biased composition (gly residues). Positions 91-101 (AEEKKEEKKEE) are enriched in basic and acidic residues.

It belongs to the eukaryotic ribosomal protein P1/P2 family. In terms of assembly, P1 and P2 exist as dimers at the large ribosomal subunit. In terms of processing, phosphorylated.

In terms of biological role, plays an important role in the elongation step of protein synthesis. The chain is Large ribosomal subunit protein P2 from Branchiostoma floridae (Florida lancelet).